We begin with the raw amino-acid sequence, 214 residues long: Adenylate kinase (214 aa).

Residue 10–15 (GAGKGT) participates in ATP binding. Residues 30-59 (STGDMLRAAVKSGSELGKQAKDIMDAGKLV) form an NMP region. AMP is bound by residues T31, R36, 57–59 (KLV), 85–88 (GFPR), and Q92. An LID region spans residues 122–159 (GRRVHAPSGRVYHVKFNPPKVEGKDDVTGEELTTRKDD). ATP contacts are provided by residues R123 and 132 to 133 (VY). AMP is bound by residues R156 and R167. At K192 the chain carries N6-acetyllysine. Position 200 (K200) interacts with ATP.

Belongs to the adenylate kinase family. Monomer.

Its subcellular location is the cytoplasm. It catalyses the reaction AMP + ATP = 2 ADP. It functions in the pathway purine metabolism; AMP biosynthesis via salvage pathway; AMP from ADP: step 1/1. Catalyzes the reversible transfer of the terminal phosphate group between ATP and AMP. Plays an important role in cellular energy homeostasis and in adenine nucleotide metabolism. The protein is Adenylate kinase of Escherichia coli O45:K1 (strain S88 / ExPEC).